The primary structure comprises 255 residues: Tryptophan synthase alpha chain (255 aa).

Active-site proton acceptor residues include E51 and D62.

The protein belongs to the TrpA family. Tetramer of two alpha and two beta chains.

The catalysed reaction is (1S,2R)-1-C-(indol-3-yl)glycerol 3-phosphate + L-serine = D-glyceraldehyde 3-phosphate + L-tryptophan + H2O. It functions in the pathway amino-acid biosynthesis; L-tryptophan biosynthesis; L-tryptophan from chorismate: step 5/5. Its function is as follows. The alpha subunit is responsible for the aldol cleavage of indoleglycerol phosphate to indole and glyceraldehyde 3-phosphate. This is Tryptophan synthase alpha chain from Maridesulfovibrio salexigens (strain ATCC 14822 / DSM 2638 / NCIMB 8403 / VKM B-1763) (Desulfovibrio salexigens).